The sequence spans 375 residues: tRNA-specific 2-thiouridylase MnmA (375 aa).

ATP-binding positions include 12–19 (GMSGGVDS) and methionine 38. The segment at 98–100 (NPD) is interaction with target base in tRNA. The active-site Nucleophile is cysteine 103. The cysteines at positions 103 and 200 are disulfide-linked. Residue glycine 127 participates in ATP binding. Residues 150 to 152 (KDQ) form an interaction with tRNA region. Cysteine 200 (cysteine persulfide intermediate) is an active-site residue. Positions 312–313 (RY) are interaction with tRNA.

The protein belongs to the MnmA/TRMU family.

It localises to the cytoplasm. It catalyses the reaction S-sulfanyl-L-cysteinyl-[protein] + uridine(34) in tRNA + AH2 + ATP = 2-thiouridine(34) in tRNA + L-cysteinyl-[protein] + A + AMP + diphosphate + H(+). Functionally, catalyzes the 2-thiolation of uridine at the wobble position (U34) of tRNA, leading to the formation of s(2)U34. The protein is tRNA-specific 2-thiouridylase MnmA of Levilactobacillus brevis (strain ATCC 367 / BCRC 12310 / CIP 105137 / JCM 1170 / LMG 11437 / NCIMB 947 / NCTC 947) (Lactobacillus brevis).